A 351-amino-acid chain; its full sequence is MNLNEFQQKYAYRKEINYDGQIDLLARVVMEQKERYILQTINGFKPAVVKGKMRHEAISREDYPAVGDWVVLQEKDFNDIVIIDQVLPRFSSIVRKVAGLRTDAQIVASNVTKVFIVISADEDLNERKLERYLTAVWESGASPHIVFSKVDLASDMDSIIEHADSIAFGIPLYKWNATNEEGKEDILANIHEDDSVVLIGSSGAGKSTLINALLTEKVLKTGSVREDDKRGRHTTTHRELFNLPTGGVIIDTPGMRELQLWTEDGDTLSHTFSDINHLIAECKFTDCKHDTEPDCAVKEALETGDLEEGRWNSYLKLQRELAYIERKQNAKLATEERKKWKKISMQQKKNR.

In terms of domain architecture, CP-type G spans 100–258; the sequence is LRTDAQIVAS…IIDTPGMREL (159 aa). GTP is bound by residues 148 to 151 and 200 to 208; these read SKVD and GSSGAGKST. Residues Cys282, Cys287, His289, and Cys295 each contribute to the Zn(2+) site.

This sequence belongs to the TRAFAC class YlqF/YawG GTPase family. RsgA subfamily. Monomer. Associates with 30S ribosomal subunit, binds 16S rRNA. It depends on Zn(2+) as a cofactor.

It is found in the cytoplasm. One of several proteins that assist in the late maturation steps of the functional core of the 30S ribosomal subunit. Helps release RbfA from mature subunits. May play a role in the assembly of ribosomal proteins into the subunit. Circularly permuted GTPase that catalyzes slow GTP hydrolysis, GTPase activity is stimulated by the 30S ribosomal subunit. The chain is Small ribosomal subunit biogenesis GTPase RsgA 1 from Oceanobacillus iheyensis (strain DSM 14371 / CIP 107618 / JCM 11309 / KCTC 3954 / HTE831).